A 375-amino-acid chain; its full sequence is Chaperone protein DnaJ (375 aa).

The J domain maps to 5–70 (DYYEILGISK…EKRAAYDQYG (66 aa)). Residues 130–208 (GIIKEICIPT…CHGNGRVERS (79 aa)) form a CR-type zinc finger. Cysteine 143, cysteine 146, cysteine 160, cysteine 163, cysteine 182, cysteine 185, cysteine 196, and cysteine 199 together coordinate Zn(2+). CXXCXGXG motif repeat units follow at residues 143-150 (CEKCRGTG), 160-167 (CMTCHGQG), 182-189 (CPTCHGHG), and 196-203 (CNKCHGNG).

It belongs to the DnaJ family. In terms of assembly, homodimer. Zn(2+) is required as a cofactor.

The protein resides in the cytoplasm. Functionally, participates actively in the response to hyperosmotic and heat shock by preventing the aggregation of stress-denatured proteins and by disaggregating proteins, also in an autonomous, DnaK-independent fashion. Unfolded proteins bind initially to DnaJ; upon interaction with the DnaJ-bound protein, DnaK hydrolyzes its bound ATP, resulting in the formation of a stable complex. GrpE releases ADP from DnaK; ATP binding to DnaK triggers the release of the substrate protein, thus completing the reaction cycle. Several rounds of ATP-dependent interactions between DnaJ, DnaK and GrpE are required for fully efficient folding. Also involved, together with DnaK and GrpE, in the DNA replication of plasmids through activation of initiation proteins. This is Chaperone protein DnaJ from Blochmanniella pennsylvanica (strain BPEN).